The sequence spans 444 residues: Phosphoglucosamine mutase (444 aa).

The Phosphoserine intermediate role is filled by serine 104. Residues serine 104, aspartate 243, aspartate 245, and aspartate 247 each contribute to the Mg(2+) site. A Phosphoserine modification is found at serine 104.

Belongs to the phosphohexose mutase family. Mg(2+) serves as cofactor. In terms of processing, activated by phosphorylation.

The catalysed reaction is alpha-D-glucosamine 1-phosphate = D-glucosamine 6-phosphate. Its function is as follows. Catalyzes the conversion of glucosamine-6-phosphate to glucosamine-1-phosphate. In Neisseria meningitidis serogroup C / serotype 2a (strain ATCC 700532 / DSM 15464 / FAM18), this protein is Phosphoglucosamine mutase.